We begin with the raw amino-acid sequence, 111 residues long: Thioredoxin 2 (111 aa).

A Thioredoxin domain is found at 2 to 109 (SKGVITITDA…LLSFLDTHLN (108 aa)). A disulfide bond links cysteine 33 and cysteine 36.

Belongs to the thioredoxin family.

In terms of biological role, participates in various redox reactions through the reversible oxidation of its active center dithiol to a disulfide and catalyzes dithiol-disulfide exchange reactions. In Nostoc sp. (strain PCC 7120 / SAG 25.82 / UTEX 2576), this protein is Thioredoxin 2 (trxB).